The sequence spans 222 residues: V-type ATP synthase subunit D (222 aa).

It belongs to the V-ATPase D subunit family.

Its function is as follows. Produces ATP from ADP in the presence of a proton gradient across the membrane. This Deinococcus geothermalis (strain DSM 11300 / CIP 105573 / AG-3a) protein is V-type ATP synthase subunit D.